A 320-amino-acid chain; its full sequence is ATP-dependent 6-phosphofructokinase (320 aa).

An ATP-binding site is contributed by G11. 21–25 (RAVTK) contributes to the ADP binding site. ATP is bound by residues 72 to 73 (RF) and 102 to 105 (GDGS). Residue D103 participates in Mg(2+) binding. Substrate is bound at residue 125-127 (TID). Catalysis depends on D127, which acts as the Proton acceptor. R154 lines the ADP pocket. Substrate contacts are provided by residues R162 and 169–171 (MGR). ADP contacts are provided by residues 185–187 (GAD) and 213–215 (KDH). Residues E222, R243, and 249-252 (HMQR) each bind substrate.

The protein belongs to the phosphofructokinase type A (PFKA) family. ATP-dependent PFK group I subfamily. Prokaryotic clade 'B1' sub-subfamily. As to quaternary structure, homotetramer. Mg(2+) is required as a cofactor.

It localises to the cytoplasm. The enzyme catalyses beta-D-fructose 6-phosphate + ATP = beta-D-fructose 1,6-bisphosphate + ADP + H(+). It functions in the pathway carbohydrate degradation; glycolysis; D-glyceraldehyde 3-phosphate and glycerone phosphate from D-glucose: step 3/4. With respect to regulation, allosterically activated by ADP and other diphosphonucleosides, and allosterically inhibited by phosphoenolpyruvate. Catalyzes the phosphorylation of D-fructose 6-phosphate to fructose 1,6-bisphosphate by ATP, the first committing step of glycolysis. The sequence is that of ATP-dependent 6-phosphofructokinase from Lactobacillus helveticus (strain DPC 4571).